Consider the following 545-residue polypeptide: CTP synthase (545 aa).

An amidoligase domain region spans residues 1-266; it reads MATNYIFVTG…DTFVCDRFRL (266 aa). Serine 14 provides a ligand contact to CTP. Serine 14 serves as a coordination point for UTP. ATP contacts are provided by residues 15 to 20 and aspartate 72; that span reads SLGKGI. Aspartate 72 and glutamate 140 together coordinate Mg(2+). CTP contacts are provided by residues 147–149, 187–192, and lysine 223; these read DIE and KTKPTQ. Residues 187 to 192 and lysine 223 contribute to the UTP site; that span reads KTKPTQ. An ATP-binding site is contributed by 239 to 241; that stretch reads KDV. The region spanning 291–542 is the Glutamine amidotransferase type-1 domain; that stretch reads TIGMVGKYVE…VAAAKAYQDS (252 aa). L-glutamine is bound at residue glycine 352. The Nucleophile; for glutamine hydrolysis role is filled by cysteine 379. L-glutamine-binding positions include 380–383, glutamate 403, and arginine 470; that span reads LGMQ. Catalysis depends on residues histidine 515 and glutamate 517.

It belongs to the CTP synthase family. Homotetramer.

It catalyses the reaction UTP + L-glutamine + ATP + H2O = CTP + L-glutamate + ADP + phosphate + 2 H(+). The enzyme catalyses L-glutamine + H2O = L-glutamate + NH4(+). It carries out the reaction UTP + NH4(+) + ATP = CTP + ADP + phosphate + 2 H(+). It functions in the pathway pyrimidine metabolism; CTP biosynthesis via de novo pathway; CTP from UDP: step 2/2. Allosterically activated by GTP, when glutamine is the substrate; GTP has no effect on the reaction when ammonia is the substrate. The allosteric effector GTP functions by stabilizing the protein conformation that binds the tetrahedral intermediate(s) formed during glutamine hydrolysis. Inhibited by the product CTP, via allosteric rather than competitive inhibition. In terms of biological role, catalyzes the ATP-dependent amination of UTP to CTP with either L-glutamine or ammonia as the source of nitrogen. Regulates intracellular CTP levels through interactions with the four ribonucleotide triphosphates. This chain is CTP synthase, found in Actinobacillus pleuropneumoniae serotype 5b (strain L20).